The following is a 157-amino-acid chain: 3-hydroxybutyryl-CoA dehydratase (157 aa).

The 99-residue stretch at 22 to 120 (KKEISSSDVV…IPERRRARLA (99 aa)) folds into the MaoC-like domain.

It catalyses the reaction (3R)-3-hydroxybutanoyl-CoA = (2E)-butenoyl-CoA + H2O. In terms of biological role, involved in the regeneration of glyoxylate from a molecule of acetyl-CoA. This is 3-hydroxybutyryl-CoA dehydratase from Methylorubrum extorquens (strain ATCC 14718 / DSM 1338 / JCM 2805 / NCIMB 9133 / AM1) (Methylobacterium extorquens).